Consider the following 365-residue polypeptide: UDP-N-acetylglucosamine--N-acetylmuramyl-(pentapeptide) pyrophosphoryl-undecaprenol N-acetylglucosamine transferase (365 aa).

Residues 10–12 (TGG), Asn124, Arg165, Ser193, Ile248, and Gln293 contribute to the UDP-N-acetyl-alpha-D-glucosamine site.

This sequence belongs to the glycosyltransferase 28 family. MurG subfamily.

The protein localises to the cell inner membrane. The catalysed reaction is di-trans,octa-cis-undecaprenyl diphospho-N-acetyl-alpha-D-muramoyl-L-alanyl-D-glutamyl-meso-2,6-diaminopimeloyl-D-alanyl-D-alanine + UDP-N-acetyl-alpha-D-glucosamine = di-trans,octa-cis-undecaprenyl diphospho-[N-acetyl-alpha-D-glucosaminyl-(1-&gt;4)]-N-acetyl-alpha-D-muramoyl-L-alanyl-D-glutamyl-meso-2,6-diaminopimeloyl-D-alanyl-D-alanine + UDP + H(+). Its pathway is cell wall biogenesis; peptidoglycan biosynthesis. Its function is as follows. Cell wall formation. Catalyzes the transfer of a GlcNAc subunit on undecaprenyl-pyrophosphoryl-MurNAc-pentapeptide (lipid intermediate I) to form undecaprenyl-pyrophosphoryl-MurNAc-(pentapeptide)GlcNAc (lipid intermediate II). The polypeptide is UDP-N-acetylglucosamine--N-acetylmuramyl-(pentapeptide) pyrophosphoryl-undecaprenol N-acetylglucosamine transferase (Geotalea uraniireducens (strain Rf4) (Geobacter uraniireducens)).